Consider the following 580-residue polypeptide: Purine permease (580 aa).

12 helical membrane-spanning segments follow: residues 68 to 88 (PLVL…AGVI), 107 to 127 (SQYL…VQMF), 136 to 156 (YYVG…ITVA), 184 to 204 (YGAL…LSFM), 211 to 231 (ALFP…SLIG), 263 to 283 (LPWG…TIIL), 294 to 314 (SCAV…CGYF), 385 to 405 (LGNG…MSVF), 426 to 446 (CCFF…LVAI), 447 to 467 (PSSV…ISGV), 481 to 501 (FILT…DWFS), and 522 to 542 (LVMA…NLIL).

Belongs to the nucleobase:cation symporter-2 (NCS2) (TC 2.A.40) family.

It is found in the membrane. In terms of biological role, able to transport with low efficiency all natural purines as well as purine analogs. This Emericella nidulans (strain FGSC A4 / ATCC 38163 / CBS 112.46 / NRRL 194 / M139) (Aspergillus nidulans) protein is Purine permease (uapC).